The sequence spans 287 residues: Phosphatidylserine decarboxylase proenzyme (287 aa).

Residues D89, H146, and S252 each act as charge relay system; for autoendoproteolytic cleavage activity in the active site. Residue S252 is the Schiff-base intermediate with substrate; via pyruvic acid; for decarboxylase activity of the active site. Pyruvic acid (Ser); by autocatalysis is present on S252.

It belongs to the phosphatidylserine decarboxylase family. PSD-B subfamily. Prokaryotic type I sub-subfamily. In terms of assembly, heterodimer of a large membrane-associated beta subunit and a small pyruvoyl-containing alpha subunit. Pyruvate serves as cofactor. Post-translationally, is synthesized initially as an inactive proenzyme. Formation of the active enzyme involves a self-maturation process in which the active site pyruvoyl group is generated from an internal serine residue via an autocatalytic post-translational modification. Two non-identical subunits are generated from the proenzyme in this reaction, and the pyruvate is formed at the N-terminus of the alpha chain, which is derived from the carboxyl end of the proenzyme. The autoendoproteolytic cleavage occurs by a canonical serine protease mechanism, in which the side chain hydroxyl group of the serine supplies its oxygen atom to form the C-terminus of the beta chain, while the remainder of the serine residue undergoes an oxidative deamination to produce ammonia and the pyruvoyl prosthetic group on the alpha chain. During this reaction, the Ser that is part of the protease active site of the proenzyme becomes the pyruvoyl prosthetic group, which constitutes an essential element of the active site of the mature decarboxylase.

The protein resides in the cell membrane. The enzyme catalyses a 1,2-diacyl-sn-glycero-3-phospho-L-serine + H(+) = a 1,2-diacyl-sn-glycero-3-phosphoethanolamine + CO2. It functions in the pathway phospholipid metabolism; phosphatidylethanolamine biosynthesis; phosphatidylethanolamine from CDP-diacylglycerol: step 2/2. Catalyzes the formation of phosphatidylethanolamine (PtdEtn) from phosphatidylserine (PtdSer). This Shewanella pealeana (strain ATCC 700345 / ANG-SQ1) protein is Phosphatidylserine decarboxylase proenzyme.